Consider the following 224-residue polypeptide: Histone H1.03 (224 aa).

Composition is skewed to low complexity over residues 1 to 22 and 30 to 42; these read MAET…AKAA and AAGG…PAGP. 2 disordered regions span residues 1 to 43 and 99 to 224; these read MAET…AGPS and QTKG…PKKK. The 74-residue stretch at 40–113 folds into the H15 domain; sequence AGPSVTELIT…GASGSFRLSK (74 aa). 4 stretches are compositionally biased toward basic residues: residues 122-137, 145-162, 170-188, and 197-224; these read APKK…KPAA, KKPK…KAKK, KAAK…KKAV, and KAVK…PKKK.

The protein belongs to the histone H1/H5 family.

It localises to the nucleus. It is found in the chromosome. Its function is as follows. Histones H1 are necessary for the condensation of nucleosome chains into higher-order structures. The sequence is that of Histone H1.03 from Gallus gallus (Chicken).